The chain runs to 184 residues: Cytidylate kinase (184 aa).

8 to 16 (GQPGSGKTT) contacts ATP.

This sequence belongs to the cytidylate kinase family. Type 2 subfamily.

The protein resides in the cytoplasm. The catalysed reaction is CMP + ATP = CDP + ADP. It carries out the reaction dCMP + ATP = dCDP + ADP. The chain is Cytidylate kinase from Pyrobaculum islandicum (strain DSM 4184 / JCM 9189 / GEO3).